The following is a 95-amino-acid chain: Defensin-like protein 247 (95 aa).

The signal sequence occupies residues 1 to 24; that stretch reads MKFAAIFLVTCVFFSLFSSNLSQG. 4 disulfide bridges follow: cysteine 37–cysteine 94, cysteine 48–cysteine 77, cysteine 56–cysteine 87, and cysteine 75–cysteine 89.

It belongs to the DEFL family.

It is found in the secreted. The protein is Defensin-like protein 247 (SCRL6) of Arabidopsis thaliana (Mouse-ear cress).